We begin with the raw amino-acid sequence, 89 residues long: Small ribosomal subunit protein uS15 (89 aa).

The protein belongs to the universal ribosomal protein uS15 family. As to quaternary structure, part of the 30S ribosomal subunit. Forms a bridge to the 50S subunit in the 70S ribosome, contacting the 23S rRNA.

Functionally, one of the primary rRNA binding proteins, it binds directly to 16S rRNA where it helps nucleate assembly of the platform of the 30S subunit by binding and bridging several RNA helices of the 16S rRNA. Its function is as follows. Forms an intersubunit bridge (bridge B4) with the 23S rRNA of the 50S subunit in the ribosome. This chain is Small ribosomal subunit protein uS15, found in Lactobacillus johnsonii (strain CNCM I-12250 / La1 / NCC 533).